We begin with the raw amino-acid sequence, 253 residues long: uncharacterized protein (253 aa).

2 consecutive EamA domains span residues 1 to 97 and 116 to 237; these read MFFM…IYSL and FFWA…ISRL. Helical transmembrane passes span 2–22, 28–48, 53–73, 80–100, 101–121, 138–158, 162–182, and 214–234; these read FFMA…AKQL, IFLL…GLLY, ESAV…TLIL, TEVI…LNLG, IYFS…WALF, AVQL…QFYF, INFL…SFYL, and GVNV…GILI.

Belongs to the EamA transporter family.

Its subcellular location is the cell membrane. This is an uncharacterized protein from Acidianus ambivalens (Desulfurolobus ambivalens).